The following is a 513-amino-acid chain: GMP synthase [glutamine-hydrolyzing] (513 aa).

The region spanning 5 to 195 (LVLVIDFGGQ…VYNICGCTGD (191 aa)) is the Glutamine amidotransferase type-1 domain. Cys-82 serves as the catalytic Nucleophile. Active-site residues include His-169 and Glu-171. The GMPS ATP-PPase domain occupies 196-388 (WKMDSFVEKT…LGIPEKLVFR (193 aa)). 223 to 229 (SGGVDSS) serves as a coordination point for ATP.

Homodimer.

The enzyme catalyses XMP + L-glutamine + ATP + H2O = GMP + L-glutamate + AMP + diphosphate + 2 H(+). The protein operates within purine metabolism; GMP biosynthesis; GMP from XMP (L-Gln route): step 1/1. In terms of biological role, catalyzes the synthesis of GMP from XMP. The protein is GMP synthase [glutamine-hydrolyzing] of Clostridium botulinum (strain Alaska E43 / Type E3).